The primary structure comprises 795 residues: Phenylalanine--tRNA ligase beta subunit (795 aa).

The tRNA-binding domain occupies 39–148 (AGSFHGVVVG…ADAPIGTDIR (110 aa)). One can recognise a B5 domain in the interval 401–476 (PKRATITLRR…RVYGYNNIPD (76 aa)). Residues Asp-454, Asp-460, Glu-463, and Glu-464 each coordinate Mg(2+). Positions 701–794 (SRFPANRRDI…LKERFQASLR (94 aa)) constitute an FDX-ACB domain.

Belongs to the phenylalanyl-tRNA synthetase beta subunit family. Type 1 subfamily. In terms of assembly, tetramer of two alpha and two beta subunits. It depends on Mg(2+) as a cofactor.

Its subcellular location is the cytoplasm. It carries out the reaction tRNA(Phe) + L-phenylalanine + ATP = L-phenylalanyl-tRNA(Phe) + AMP + diphosphate + H(+). The chain is Phenylalanine--tRNA ligase beta subunit from Shigella sonnei (strain Ss046).